The primary structure comprises 351 residues: Type II methyltransferase M.DsaV (351 aa).

Residues 6–312 (LKFIDLFAGI…QKMLSYIDLT (307 aa)) form the SAM-dependent MTase C5-type domain. The active site involves Cys75.

The protein belongs to the class I-like SAM-binding methyltransferase superfamily. C5-methyltransferase family.

It carries out the reaction a 2'-deoxycytidine in DNA + S-adenosyl-L-methionine = a 5-methyl-2'-deoxycytidine in DNA + S-adenosyl-L-homocysteine + H(+). A methylase, recognizes the double-stranded sequence 5'-CCNGG-3', methylates C-2 on both strands, and protects the DNA from cleavage by the DsaV endonuclease. The protein is Type II methyltransferase M.DsaV of Dactylococcopsis salina (Myxobaktron salinum).